The following is a 135-amino-acid chain: Aspartate 1-decarboxylase (135 aa).

Residue Ser25 is the Schiff-base intermediate with substrate; via pyruvic acid of the active site. Position 25 is a pyruvic acid (Ser) (Ser25). Thr57 serves as a coordination point for substrate. Tyr58 acts as the Proton donor in catalysis. A substrate-binding site is contributed by 73–75 (GAA).

It belongs to the PanD family. Heterooctamer of four alpha and four beta subunits. It depends on pyruvate as a cofactor. In terms of processing, is synthesized initially as an inactive proenzyme, which is activated by self-cleavage at a specific serine bond to produce a beta-subunit with a hydroxyl group at its C-terminus and an alpha-subunit with a pyruvoyl group at its N-terminus.

The protein localises to the cytoplasm. It carries out the reaction L-aspartate + H(+) = beta-alanine + CO2. The protein operates within cofactor biosynthesis; (R)-pantothenate biosynthesis; beta-alanine from L-aspartate: step 1/1. Catalyzes the pyruvoyl-dependent decarboxylation of aspartate to produce beta-alanine. The sequence is that of Aspartate 1-decarboxylase from Mycolicibacterium vanbaalenii (strain DSM 7251 / JCM 13017 / BCRC 16820 / KCTC 9966 / NRRL B-24157 / PYR-1) (Mycobacterium vanbaalenii).